The following is a 326-amino-acid chain: N-acetyl-gamma-glutamyl-phosphate reductase (326 aa).

Residue cysteine 155 is part of the active site.

This sequence belongs to the NAGSA dehydrogenase family. Type 1 subfamily.

It localises to the cytoplasm. It carries out the reaction N-acetyl-L-glutamate 5-semialdehyde + phosphate + NADP(+) = N-acetyl-L-glutamyl 5-phosphate + NADPH + H(+). Its pathway is amino-acid biosynthesis; L-arginine biosynthesis; N(2)-acetyl-L-ornithine from L-glutamate: step 3/4. In terms of biological role, catalyzes the NADPH-dependent reduction of N-acetyl-5-glutamyl phosphate to yield N-acetyl-L-glutamate 5-semialdehyde. The chain is N-acetyl-gamma-glutamyl-phosphate reductase from Shewanella loihica (strain ATCC BAA-1088 / PV-4).